The chain runs to 227 residues: Ribonuclease HII (227 aa).

The 190-residue stretch at 16-205 (SLLAGVDEVG…VKMALDAVGV (190 aa)) folds into the RNase H type-2 domain. Positions 22, 23, and 114 each coordinate a divalent metal cation.

This sequence belongs to the RNase HII family. Mn(2+) is required as a cofactor. Requires Mg(2+) as cofactor.

The protein resides in the cytoplasm. The enzyme catalyses Endonucleolytic cleavage to 5'-phosphomonoester.. Its function is as follows. Endonuclease that specifically degrades the RNA of RNA-DNA hybrids. The chain is Ribonuclease HII from Marinobacter nauticus (strain ATCC 700491 / DSM 11845 / VT8) (Marinobacter aquaeolei).